The primary structure comprises 395 residues: Leucine aminopeptidase 1 (395 aa).

An N-terminal signal peptide occupies residues 1-19; sequence MKHLSLLALAAVAPTTALA. A propeptide spanning residues 20 to 95 is cleaved from the precursor; that stretch reads GVIDHQQVTF…SVKSFEQTKV (76 aa). N-linked (GlcNAc...) asparagine glycosylation occurs at Asn187. Positions 195, 214, 253, and 280 each coordinate Zn(2+). A disulfide bond links Cys329 and Cys333. Residue His362 participates in Zn(2+) binding.

The protein belongs to the peptidase M28 family. M28E subfamily. Monomer. Zn(2+) is required as a cofactor.

Its subcellular location is the secreted. In terms of biological role, extracellular aminopeptidase that allows assimilation of proteinaceous substrates. This chain is Leucine aminopeptidase 1 (LAP1), found in Uncinocarpus reesii (strain UAMH 1704).